Reading from the N-terminus, the 409-residue chain is Putative integrase/recombinase y4rA (409 aa).

The Core-binding (CB) domain occupies 112 to 197 (SAVEQHVQAY…ALRSFLSYAR (86 aa)). Residues 220 to 402 (SIPRAIGRDD…DLDALRTLAL (183 aa)) form the Tyr recombinase domain. Active-site residues include arginine 260, lysine 284, histidine 354, arginine 357, and histidine 380. The active-site O-(3'-phospho-DNA)-tyrosine intermediate is tyrosine 389.

It belongs to the 'phage' integrase family.

The polypeptide is Putative integrase/recombinase y4rA (Sinorhizobium fredii (strain NBRC 101917 / NGR234)).